The chain runs to 1286 residues: CLIP-associating protein 2 (1286 aa).

The golgi localization stretch occupies residues 1 to 40 (MRRLICKRICDYKSFDDEESVDGNRPSSAASAFKVPAPKT). Phosphoserine is present on residues S14 and S20. The segment at 17-67 (DEESVDGNRPSSAASAFKVPAPKTPGNPVSSARKPGSAGGPKVGGPSKEGG) is disordered. Positions 53–67 (SAGGPKVGGPSKEGG) are enriched in gly residues. The tract at residues 66 to 317 (GGAGAVDEDD…KSLQTYLKSS (252 aa)) is TOG 1. 3 HEAT repeats span residues 179 to 214 (HGAE…IRHT), 215 to 251 (HVPR…EWQT), and 256 to 293 (RHAA…HFPG). The tract at residues 320 to 374 (VASLPQSDRSSSSSQESLNRPFSSKWSTANPSTVAGRVSVGGSKANPLPGSLQRS) is disordered. Phosphoserine occurs at positions 322, 333, and 336. Residues 322–340 (SLPQSDRSSSSSQESLNRP) show a composition bias toward low complexity. A compositionally biased stretch (polar residues) spans 341–352 (FSSKWSTANPST). Phosphoserine occurs at positions 374, 376, and 413. The interval 411 to 473 (YASLEDTSDK…GSRSGSPGRV (63 aa)) is disordered. Basic and acidic residues predominate over residues 417–431 (TSDKMDGTASDDGRV). Positions 450–565 (RGRSRTKMVS…GPGYGISQSS (116 aa)) are interaction with microtubules, MAPRE1 and MAPRE3. Positions 459–473 (SQSQPGSRSGSPGRV) are enriched in low complexity. A phosphoserine mark is found at S461, S465, S469, S484, and S495. Positions 493 to 564 (SASAQKRSKI…LGPGYGISQS (72 aa)) are disordered. The short motif at 500–503 (SKIP) is the SXIP motif 1; mediates interaction with MAPRE1 and targeting to microtubule plus ends element. S513 bears the Phosphoserine mark. Residues 523–526 (SRIP) carry the SXIP motif 2; mediates interaction with MAPRE1 and targeting to microtubule plus ends motif. Phosphoserine is present on residues S531, S535, S570, S572, S581, S614, and S620. The segment covering 605–616 (RRYESYGMHSDD) has biased composition (basic and acidic residues). The disordered stretch occupies residues 605–638 (RRYESYGMHSDDDANSDASSACSERSYSSRNGSI). Positions 620–634 (SDASSACSERSYSSR) are enriched in low complexity. Positions 642–873 (MRQTEDVAEV…TKLLHNHLRN (232 aa)) are TOG 2. HEAT repeat units follow at residues 702 to 739 (KVFS…KMGA) and 764 to 801 (LQFN…QMDP). A Phosphothreonine modification is found at T779. The interaction with RSN and localization to the Golgi and kinetochores stretch occupies residues 864–1286 (TKLLHNHLRN…DPTADVSGQS (423 aa)). Disordered stretches follow at residues 870–920 (HLRN…FDYD) and 944–989 (SFRS…SQPA). Composition is skewed to polar residues over residues 872–884 (RNTG…SMGS) and 893–914 (SPAN…TLSP). S884 carries the post-translational modification Phosphoserine. A phosphoserine mark is found at S944, S947, S1005, and S1021. The segment covering 947–964 (SQEDMSEPVRRDPKKEDG) has biased composition (basic and acidic residues). A required for cortical localization region spans residues 1009 to 1286 (RDYNPYNYSD…DPTADVSGQS (278 aa)). HEAT repeat units follow at residues 1046 to 1083 (LDHS…TQEE), 1090 to 1127 (EHFK…HQPA), and 1208 to 1245 (MLLP…VIGD).

Belongs to the CLASP family. As to quaternary structure, interacts with microtubules. Interacts with MAPRE1; probably required for targeting to growing microtubule plus ends. Interacts with ERC1, MAPRE3 and PHLDB2. The interaction with ERC1 may be mediated by PHLDB2. Interacts with GCC2; recruits CLASP2 to Golgi membranes. Interacts with CLIP2 and RSN. Interacts with MACF1. Interacts with mtcl2. Interacts with MTCL1. Post-translationally, phosphorylated by GSK3B. Phosphorylation by GSK3B may negatively regulate binding to microtubule lattices in lamella. Isoform 2 is phosphorylated on Ser-241. As to expression, highly expressed in brain and at low levels in heart, kidney and lung.

The protein localises to the cytoplasm. The protein resides in the cytoskeleton. Its subcellular location is the microtubule organizing center. It is found in the centrosome. It localises to the chromosome. The protein localises to the centromere. The protein resides in the kinetochore. Its subcellular location is the spindle. It is found in the spindle pole. It localises to the golgi apparatus. The protein localises to the trans-Golgi network. The protein resides in the cell membrane. Its subcellular location is the cell projection. It is found in the ruffle membrane. It localises to the cell cortex. Its function is as follows. Microtubule plus-end tracking protein that promotes the stabilization of dynamic microtubules. Involved in the nucleation of noncentrosomal microtubules originating from the trans-Golgi network (TGN). Required for the polarization of the cytoplasmic microtubule arrays in migrating cells towards the leading edge of the cell. May act at the cell cortex to enhance the frequency of rescue of depolymerizing microtubules by attaching their plus-ends to cortical platforms composed of ERC1 and PHLDB2. This cortical microtubule stabilizing activity is regulated at least in part by phosphatidylinositol 3-kinase signaling. Also performs a similar stabilizing function at the kinetochore which is essential for the bipolar alignment of chromosomes on the mitotic spindle. Acts as a mediator of ERBB2-dependent stabilization of microtubules at the cell cortex. The chain is CLIP-associating protein 2 (Clasp2) from Mus musculus (Mouse).